The following is a 137-amino-acid chain: Small ribosomal subunit protein uS12 (137 aa).

The interval 1–57 (MPTINQLVRKPRRAQVTKSKSPAMNVGYNSRKKVQTKLASPQKRGVATRVGTMTPKK) is disordered. Position 102 is a 3-methylthioaspartic acid (Asp-102).

It belongs to the universal ribosomal protein uS12 family. As to quaternary structure, part of the 30S ribosomal subunit. Contacts proteins S8 and S17. May interact with IF1 in the 30S initiation complex.

Its function is as follows. With S4 and S5 plays an important role in translational accuracy. In terms of biological role, interacts with and stabilizes bases of the 16S rRNA that are involved in tRNA selection in the A site and with the mRNA backbone. Located at the interface of the 30S and 50S subunits, it traverses the body of the 30S subunit contacting proteins on the other side and probably holding the rRNA structure together. The combined cluster of proteins S8, S12 and S17 appears to hold together the shoulder and platform of the 30S subunit. The protein is Small ribosomal subunit protein uS12 of Lactococcus lactis subsp. lactis (strain IL1403) (Streptococcus lactis).